The following is a 612-amino-acid chain: uncharacterized protein (612 aa).

This is an uncharacterized protein from Rickettsia prowazekii (strain Madrid E).